We begin with the raw amino-acid sequence, 342 residues long: Organic solute transporter alpha-like protein 2 (342 aa).

Residues 1-50 are Extracellular-facing; that stretch reads MLEISPWETLVKLLTDSLLNCTGTHEDVPHAKTFLRSLTTTYIASLAVAT. N20 carries N-linked (GlcNAc...) asparagine glycosylation. Residues 51–71 form a helical membrane-spanning segment; that stretch reads AVTVGTVCLAVLHLIYIHFYI. Topologically, residues 72–79 are cytoplasmic; sequence THSSRRLH. The chain crosses the membrane as a helical span at residues 80–100; the sequence is IVLLACTAPLVSLLALVAMYM. Residues 101–109 lie on the Extracellular side of the membrane; sequence PRVWFLSHL. Residues 110–130 form a helical membrane-spanning segment; sequence LSFLYFSFALWVIICLLLHIF. At 131–176 the chain is on the cytoplasmic side; that stretch reads DGHHALVTKMMQRLQYVEIATPPFCCLFPCLPKVRLEGKKIRWCEL. The chain crosses the membrane as a helical span at residues 177–197; the sequence is MVMQAPIVRLFATLVSLVIYF. Residues 198–208 lie on the Extracellular side of the membrane; that stretch reads EYQDQGLVPLK. A helical membrane pass occupies residues 209 to 229; that stretch reads VLDFITLPSLLAGIYGTHILV. Residues 230–243 are Cytoplasmic-facing; sequence TTVSRMDELISYRY. A helical membrane pass occupies residues 244–264; it reads VVVFRLLDFFFMVFGLQQPVF. The Extracellular segment spans residues 265–290; it reads DFLARYGAFGCGTVLPAIETSFYWKN. A helical transmembrane segment spans residues 291–311; it reads FFTVIEAFCVTLISTVLLQPS. Residues 312–342 are Cytoplasmic-facing; that stretch reads KSSFFDKHPSCRSMSSARSTITDVDTDESTT.

Belongs to the OST-alpha family.

The protein resides in the cell membrane. Its function is as follows. Probable transporter. This chain is Organic solute transporter alpha-like protein 2 (osta-2), found in Caenorhabditis elegans.